Here is a 362-residue protein sequence, read N- to C-terminus: Phospho-N-acetylmuramoyl-pentapeptide-transferase (362 aa).

10 helical membrane passes run Val-18–Leu-38, Thr-73–Leu-93, Tyr-97–Trp-117, Tyr-134–Thr-154, Leu-160–Leu-180, Gly-200–Ala-220, Ala-237–Phe-257, Val-264–Val-284, Ile-289–Val-309, and Gln-339–Leu-359.

It belongs to the glycosyltransferase 4 family. MraY subfamily. Mg(2+) is required as a cofactor.

Its subcellular location is the cell inner membrane. It catalyses the reaction UDP-N-acetyl-alpha-D-muramoyl-L-alanyl-gamma-D-glutamyl-meso-2,6-diaminopimeloyl-D-alanyl-D-alanine + di-trans,octa-cis-undecaprenyl phosphate = di-trans,octa-cis-undecaprenyl diphospho-N-acetyl-alpha-D-muramoyl-L-alanyl-D-glutamyl-meso-2,6-diaminopimeloyl-D-alanyl-D-alanine + UMP. It participates in cell wall biogenesis; peptidoglycan biosynthesis. Functionally, catalyzes the initial step of the lipid cycle reactions in the biosynthesis of the cell wall peptidoglycan: transfers peptidoglycan precursor phospho-MurNAc-pentapeptide from UDP-MurNAc-pentapeptide onto the lipid carrier undecaprenyl phosphate, yielding undecaprenyl-pyrophosphoryl-MurNAc-pentapeptide, known as lipid I. This Azoarcus sp. (strain BH72) protein is Phospho-N-acetylmuramoyl-pentapeptide-transferase.